A 571-amino-acid polypeptide reads, in one-letter code: Sulfite reductase [NADPH] hemoprotein beta-component (571 aa).

[4Fe-4S] cluster contacts are provided by Cys-435, Cys-441, Cys-480, and Cys-484. Residue Cys-484 coordinates siroheme.

It belongs to the nitrite and sulfite reductase 4Fe-4S domain family. As to quaternary structure, alpha(8)-beta(8). The alpha component is a flavoprotein, the beta component is a hemoprotein. Siroheme serves as cofactor. It depends on [4Fe-4S] cluster as a cofactor.

It catalyses the reaction hydrogen sulfide + 3 NADP(+) + 3 H2O = sulfite + 3 NADPH + 4 H(+). The protein operates within sulfur metabolism; hydrogen sulfide biosynthesis; hydrogen sulfide from sulfite (NADPH route): step 1/1. Functionally, component of the sulfite reductase complex that catalyzes the 6-electron reduction of sulfite to sulfide. This is one of several activities required for the biosynthesis of L-cysteine from sulfate. This Dickeya chrysanthemi (strain Ech1591) (Dickeya zeae (strain Ech1591)) protein is Sulfite reductase [NADPH] hemoprotein beta-component.